The sequence spans 876 residues: Leucine--tRNA ligase (876 aa).

The short motif at 43–53 is the 'HIGH' region element; sequence PYPSGRIHIGH. A 'KMSKS' region motif is present at residues 632 to 636; sequence KMSKS. Lys-635 provides a ligand contact to ATP.

It belongs to the class-I aminoacyl-tRNA synthetase family.

The protein resides in the cytoplasm. The enzyme catalyses tRNA(Leu) + L-leucine + ATP = L-leucyl-tRNA(Leu) + AMP + diphosphate. The sequence is that of Leucine--tRNA ligase from Allorhizobium ampelinum (strain ATCC BAA-846 / DSM 112012 / S4) (Agrobacterium vitis (strain S4)).